The primary structure comprises 377 residues: Transcription factor EC (377 aa).

In terms of domain architecture, bHLH spans Q169–L222. The interval D349–L377 is disordered. The segment covering S353–S370 has biased composition (low complexity).

It belongs to the MiT/TFE family.

Its subcellular location is the nucleus. Transcriptional regulator that acts as a repressor or an activator. Binds DNA. The protein is Transcription factor EC (TFEC) of Gallus gallus (Chicken).